The sequence spans 354 residues: UDP-N-acetylglucosamine--N-acetylmuramyl-(pentapeptide) pyrophosphoryl-undecaprenol N-acetylglucosamine transferase (354 aa).

Residues 11-13, arginine 164, serine 194, and glutamine 289 each bind UDP-N-acetyl-alpha-D-glucosamine; that span reads SAG.

It belongs to the glycosyltransferase 28 family. MurG subfamily.

Its subcellular location is the cell membrane. It carries out the reaction di-trans,octa-cis-undecaprenyl diphospho-N-acetyl-alpha-D-muramoyl-L-alanyl-D-glutamyl-meso-2,6-diaminopimeloyl-D-alanyl-D-alanine + UDP-N-acetyl-alpha-D-glucosamine = di-trans,octa-cis-undecaprenyl diphospho-[N-acetyl-alpha-D-glucosaminyl-(1-&gt;4)]-N-acetyl-alpha-D-muramoyl-L-alanyl-D-glutamyl-meso-2,6-diaminopimeloyl-D-alanyl-D-alanine + UDP + H(+). The protein operates within cell wall biogenesis; peptidoglycan biosynthesis. Functionally, cell wall formation. Catalyzes the transfer of a GlcNAc subunit on undecaprenyl-pyrophosphoryl-MurNAc-pentapeptide (lipid intermediate I) to form undecaprenyl-pyrophosphoryl-MurNAc-(pentapeptide)GlcNAc (lipid intermediate II). The protein is UDP-N-acetylglucosamine--N-acetylmuramyl-(pentapeptide) pyrophosphoryl-undecaprenol N-acetylglucosamine transferase of Shouchella clausii (strain KSM-K16) (Alkalihalobacillus clausii).